The following is a 1048-amino-acid chain: Malignant fibrous histiocytoma-amplified sequence 1 homolog (1048 aa).

N-acetylalanine is present on A2. LRR repeat units follow at residues 60-81 (DIEV…LGSA), 84-105 (SLRV…VAEL), 108-129 (HLTE…VVSA), 132-153 (ELRK…LGAL), 155-176 (HLEE…FSCL), 178-199 (HLRT…LLQL), 201-222 (ALEE…ISAL), 224-246 (ALKI…CELA), 247-268 (SLES…FSRL), 270-292 (RLKM…LPLA), 293-314 (GLEE…IAGL), 316-337 (RLLT…IVEL), and 339-360 (GLEE…FGQL). The tract at residues 60–360 (DIEVLNLGNN…AVLPDNFGQL (301 aa)) is required for interaction with PJA2. Residues 60-645 (DIEVLNLGNN…DKLLSVAEHR (586 aa)) are required for interaction with PPP2R2A. Positions 399 to 645 (QPAVQPRLKL…DKLLSVAEHR (247 aa)) constitute a Roc domain. Residue K597 is modified to N6-acetyllysine.

Interacts with RAF1. Interacts with HSPD1. Interacts with PPP2CA; retains PPP2CA into the cytoplasm and excludes it from the nucleus. Interacts with PPP2R2A; the interaction is direct. Interacts with PJA2. Ubiquitinated. Ubiquitination by PJA2 does not lead MFHAS1 to proteasomal degradation but positively regulates its function in polarization of macrophages.

It is found in the cytoplasm. In terms of biological role, probable GTP-binding protein. Functions in innate immunity and more specifically the inflammatory response as a regulator of the Toll-like receptor TLR2 and TLR4 signaling pathways. Negatively regulates the part of the TLR4 signaling pathway that leads to the activation of the transcription factor AP-1. By retaining the phosphatase complex PP2A into the cytoplasm, prevents the dephosphorylation of the AP-1 subunit JUN which is required for proper activation of the transcription factor. Both inhibits and activates the TLR2-dependent signaling pathway. Positively regulates the TLR2 signaling pathway to activate specifically the downstream p38 and JNK MAP kinases and promote the polarization of macrophages toward the pro-inflammatory M1 phenotype. It may also play a role in the regulation of inflammation induced by high glucose through the PKB/AKT signaling pathway. Also involved in erythrocyte differentiation through activation of the ERK1/ERK2 signaling pathway. This Mus musculus (Mouse) protein is Malignant fibrous histiocytoma-amplified sequence 1 homolog.